The following is a 224-amino-acid chain: MAITDWPVHERPREKLLQRGPNALSDAELLAIFLRTGVAGKTAVDLARELLESFGSLRALLEADLKQFCHAPGLGIAKYTQLQACLEMGRRHLEDTLKRGDVLTDPQTTQRYLVARLRAYPFEVFSCLFLDNRHRVLAFEELFRGTIDGASVHPREVLKRALAHNAAAVILAHNHPSGVAEPSRADECITQRLKEALALVDIRVLDHIIVGDGETLSFAERGLL.

One can recognise an MPN domain in the interval 102–224 (VLTDPQTTQR…TLSFAERGLL (123 aa)). Zn(2+)-binding residues include His-173, His-175, and Asp-186. The JAMM motif motif lies at 173–186 (HNHPSGVAEPSRAD).

This sequence belongs to the UPF0758 family.

The polypeptide is UPF0758 protein Noc_0236 (Nitrosococcus oceani (strain ATCC 19707 / BCRC 17464 / JCM 30415 / NCIMB 11848 / C-107)).